The chain runs to 554 residues: Formate--tetrahydrofolate ligase (554 aa).

63 to 70 contacts ATP; sequence TPAGEGKT.

The protein belongs to the formate--tetrahydrofolate ligase family.

It catalyses the reaction (6S)-5,6,7,8-tetrahydrofolate + formate + ATP = (6R)-10-formyltetrahydrofolate + ADP + phosphate. The protein operates within one-carbon metabolism; tetrahydrofolate interconversion. The protein is Formate--tetrahydrofolate ligase of Halothermothrix orenii (strain H 168 / OCM 544 / DSM 9562).